The sequence spans 790 residues: AMP deaminase (790 aa).

Over residues 1–14 the composition is skewed to polar residues; that stretch reads MSTPLRGSSPQVSF. Positions 1 to 26 are disordered; the sequence is MSTPLRGSSPQVSFYESELDQEGGSD. The Zn(2+) site is built by histidine 221 and histidine 223. Substrate-binding positions include histidine 223 and 292-297; that span reads KFNLKY. Histidine 488 contacts Zn(2+). A substrate-binding site is contributed by glutamate 491. Residue histidine 510 is the Proton acceptor of the active site. Aspartate 565 contributes to the Zn(2+) binding site. Position 566-569 (566-569) interacts with substrate; the sequence is DPLQ. Disordered regions lie at residues 698–726 and 739–790; these read NKLR…SSPG and PPPL…KSDK. Composition is skewed to low complexity over residues 706–726 and 750–781; these read GSTP…SSPG and NNNN…TTTN.

This sequence belongs to the metallo-dependent hydrolases superfamily. Adenosine and AMP deaminases family. In terms of assembly, homodimer. Zn(2+) serves as cofactor.

It is found in the cytoplasm. The enzyme catalyses AMP + H2O + H(+) = IMP + NH4(+). It functions in the pathway purine metabolism; IMP biosynthesis via salvage pathway; IMP from AMP: step 1/1. Activated by ATP, inhibited by GTP, EDTA and inorganic phosphate. In terms of biological role, catalyzes the conversion of adenosine monophosphate (AMP) to inosine monophosphate (IMP) and ammonia (NH4(+)). Participates in the regulation of the adenylated nucleotide pool and the interconversion to guanylated nucleotides during early morphodifferentiation. This chain is AMP deaminase (amdA), found in Dictyostelium discoideum (Social amoeba).